The chain runs to 195 residues: Ribosome maturation factor RimM (195 aa).

The 91-residue stretch at 101–191 (ADEWYPKDLI…YLTLDPPGGL (91 aa)) folds into the PRC barrel domain.

Belongs to the RimM family. As to quaternary structure, binds ribosomal protein uS19.

It localises to the cytoplasm. An accessory protein needed during the final step in the assembly of 30S ribosomal subunit, possibly for assembly of the head region. Essential for efficient processing of 16S rRNA. May be needed both before and after RbfA during the maturation of 16S rRNA. It has affinity for free ribosomal 30S subunits but not for 70S ribosomes. In Bifidobacterium adolescentis (strain ATCC 15703 / DSM 20083 / NCTC 11814 / E194a), this protein is Ribosome maturation factor RimM.